A 124-amino-acid polypeptide reads, in one-letter code: Translation initiation factor 5A (124 aa).

The segment at 27-53 (TSYSTSKPGKHGSAKARVEGTGVFDGQ) is disordered. A Hypusine modification is found at Lys-36.

Belongs to the eIF-5A family.

The protein resides in the cytoplasm. In terms of biological role, functions by promoting the formation of the first peptide bond. The chain is Translation initiation factor 5A from Natronomonas pharaonis (strain ATCC 35678 / DSM 2160 / CIP 103997 / JCM 8858 / NBRC 14720 / NCIMB 2260 / Gabara) (Halobacterium pharaonis).